The chain runs to 368 residues: Methionine import ATP-binding protein MetN (368 aa).

The region spanning 5-260 (IELNNLSVQF…PKEALTKQFI (256 aa)) is the ABC transporter domain. 41-48 (GYSGAGKS) serves as a coordination point for ATP.

Belongs to the ABC transporter superfamily. Methionine importer (TC 3.A.1.24) family. As to quaternary structure, the complex is composed of two ATP-binding proteins (MetN), two transmembrane proteins (MetI) and a solute-binding protein (MetQ).

Its subcellular location is the cell membrane. The enzyme catalyses L-methionine(out) + ATP + H2O = L-methionine(in) + ADP + phosphate + H(+). The catalysed reaction is D-methionine(out) + ATP + H2O = D-methionine(in) + ADP + phosphate + H(+). Functionally, part of the ABC transporter complex MetNIQ involved in methionine import. Responsible for energy coupling to the transport system. The chain is Methionine import ATP-binding protein MetN from Lactococcus lactis subsp. lactis (strain IL1403) (Streptococcus lactis).